The sequence spans 340 residues: Anthranilate phosphoribosyltransferase (340 aa).

Residues glycine 84, 87–88 (GD), threonine 92, 94–97 (NIST), 112–120 (KHGSRSVSS), and serine 124 contribute to the 5-phospho-alpha-D-ribose 1-diphosphate site. Position 84 (glycine 84) interacts with anthranilate. Residue serine 96 participates in Mg(2+) binding. Arginine 170 provides a ligand contact to anthranilate. Mg(2+)-binding residues include aspartate 228 and glutamate 229.

It belongs to the anthranilate phosphoribosyltransferase family. Homodimer. Requires Mg(2+) as cofactor.

It carries out the reaction N-(5-phospho-beta-D-ribosyl)anthranilate + diphosphate = 5-phospho-alpha-D-ribose 1-diphosphate + anthranilate. It participates in amino-acid biosynthesis; L-tryptophan biosynthesis; L-tryptophan from chorismate: step 2/5. Catalyzes the transfer of the phosphoribosyl group of 5-phosphorylribose-1-pyrophosphate (PRPP) to anthranilate to yield N-(5'-phosphoribosyl)-anthranilate (PRA). The chain is Anthranilate phosphoribosyltransferase from Psychromonas ingrahamii (strain DSM 17664 / CCUG 51855 / 37).